Consider the following 436-residue polypeptide: UPF0597 protein YhaM (436 aa).

It belongs to the UPF0597 family.

The sequence is that of UPF0597 protein YhaM from Salmonella paratyphi B (strain ATCC BAA-1250 / SPB7).